The sequence spans 50 residues: Gene 38 protein (50 aa).

This chain is Gene 38 protein (38), found in Mycobacterium (Mycobacteriophage D29).